The primary structure comprises 368 residues: MRTLNVDLGERSYPIYIGENLLGDAQWFAPHIVGRRVAVISNETVAPLYLETLLGALEGREVTRVVLPDGEAYKQWETLQSIFDALLQDRHDRKTTLIALGGGVIGDMAGFAAACYQRGVNFIQVPTTLLSQVDSSVGGKTGINHPLGKNMIGAFYQPQAVVIDTASLKTLPARELSAGLAEVIKYGFICDEPFITWLEEHMDALLALEPAAVTEAIERSCAAKARVVGADERESGVRATLNLGHTFGHAIETQQGYGVWLHGEAVGAGTVMALEMSHRLGWLSAAERDRGIRLLRRAGLPVVPPADMTAEDFMEHMAVDKKVLDGRLRLVLLQGLGNAVVTGDFPREILDATLRTDYRALADQLGDE.

Residues 69–74, 103–107, 127–128, lysine 140, and lysine 149 contribute to the NAD(+) site; these read DGEAYK, GVIGD, and TT. Glutamate 182, histidine 245, and histidine 262 together coordinate Zn(2+).

Belongs to the sugar phosphate cyclases superfamily. Dehydroquinate synthase family. Co(2+) serves as cofactor. Requires Zn(2+) as cofactor. It depends on NAD(+) as a cofactor.

The protein localises to the cytoplasm. It carries out the reaction 7-phospho-2-dehydro-3-deoxy-D-arabino-heptonate = 3-dehydroquinate + phosphate. The protein operates within metabolic intermediate biosynthesis; chorismate biosynthesis; chorismate from D-erythrose 4-phosphate and phosphoenolpyruvate: step 2/7. Functionally, catalyzes the conversion of 3-deoxy-D-arabino-heptulosonate 7-phosphate (DAHP) to dehydroquinate (DHQ). In Pseudomonas paraeruginosa (strain DSM 24068 / PA7) (Pseudomonas aeruginosa (strain PA7)), this protein is 3-dehydroquinate synthase.